Consider the following 364-residue polypeptide: Geissoschizine synthase (364 aa).

Residue Cys51 coordinates Zn(2+). Asn52 is an NADP(+) binding site. Zn(2+) contacts are provided by His73, Glu74, Cys104, Cys107, Cys110, Cys118, and Cys168. Residues Leu194, Gly196, Leu197, Ser216, Thr217, Ser218, Lys221, Arg261, Val280, Ala282, Ser304, Thr306, and Arg351 each contribute to the NADP(+) site.

The protein belongs to the zinc-containing alcohol dehydrogenase family. Class-III subfamily. As to quaternary structure, homodimer. Zn(2+) serves as cofactor. As to expression, expressed in leaf epidermis.

The catalysed reaction is (19E)-geissoschizine + NADP(+) = 4,21-dehydrogeissoschizine + NADPH. Its pathway is alkaloid biosynthesis. Component of the seco-iridoid and derivatives monoterpenoid indole alkaloids (MIAs, e.g. catharanthine, tabersonine, vincadifformine, vindoline, vincristine, quinine and strychnine) biosynthesis pathway. During the conversion of strictosidine aglycone to geissoschizine, catalyzes iminium reduction on 4,21-dehydrogeissoschizine to produce 19E-geissoschizine, precursor of catharanthine and tabersonine derivatives. May also trigger the production of reactive intermediate used by the HL1, HL2, HL3 and HL4 to form catharanthine, vincadifformine and tabersonine. This Catharanthus roseus (Madagascar periwinkle) protein is Geissoschizine synthase.